The chain runs to 117 residues: MRVKGGSITRQRRRRWLKLAKGYWGHKSIGFKTAKQAVVKSWTYAFRDRKQRKRDFRKLWISRINAAARNQGISYSQLMHKIKQSNIEINRKMLAEMAIHHQSDFENIVKLAIAKSA.

Belongs to the bacterial ribosomal protein bL20 family.

Functionally, binds directly to 23S ribosomal RNA and is necessary for the in vitro assembly process of the 50S ribosomal subunit. It is not involved in the protein synthesizing functions of that subunit. This is Large ribosomal subunit protein bL20 from Mesomycoplasma hyopneumoniae (strain J / ATCC 25934 / NCTC 10110) (Mycoplasma hyopneumoniae).